The primary structure comprises 265 residues: Mlc titration factor A (265 aa).

Positions 111, 148, 152, and 211 each coordinate Zn(2+).

The protein belongs to the MtfA family. Interacts with Mlc. Zn(2+) is required as a cofactor.

The protein localises to the cytoplasm. Functionally, involved in the modulation of the activity of the glucose-phosphotransferase system (glucose-PTS). Interacts with the transcriptional repressor Mlc, preventing its interaction with DNA and leading to the modulation of expression of genes regulated by Mlc, including ptsG, which encodes the PTS system glucose-specific EIICB component. Its function is as follows. Shows zinc-dependent metallopeptidase activity. This Enterobacter sp. (strain 638) protein is Mlc titration factor A.